Reading from the N-terminus, the 271-residue chain is Extracellular metalloprotease ARB_05317 (271 aa).

The first 19 residues, 1-19 (MRFSVLLTGLAAAGSIATA), serve as a signal peptide directing secretion. N-linked (GlcNAc...) asparagine glycosylation occurs at N136. H185 provides a ligand contact to Zn(2+). The active site involves E186. H189 lines the Zn(2+) pocket. N-linked (GlcNAc...) asparagine glycosylation occurs at N200. C222 and C248 are oxidised to a cystine.

It belongs to the peptidase M43B family.

It is found in the secreted. In terms of biological role, secreted metalloproteinase that allows assimilation of proteinaceous substrates. Plays a pivotal role as a pathogenicity determinant during infections and contributes to the ability of the pathogen to persist within the mammalian host. This is Extracellular metalloprotease ARB_05317 from Arthroderma benhamiae (strain ATCC MYA-4681 / CBS 112371) (Trichophyton mentagrophytes).